Here is a 1088-residue protein sequence, read N- to C-terminus: RNA-directed RNA polymerase (1088 aa).

Residues 501-687 enclose the RdRp catalytic domain; sequence LSYGDVTRFL…AKRYIAGGKI (187 aa).

This sequence belongs to the reoviridae RNA-directed RNA polymerase family. In terms of assembly, interacts with VP3 (Potential). Interacts with VP2; this interaction activates VP1. Interacts with NSP5; this interaction is probably necessary for the formation of functional virus factories. Interacts with NSP2; this interaction is weak. Requires Mg(2+) as cofactor.

The protein resides in the virion. It carries out the reaction RNA(n) + a ribonucleoside 5'-triphosphate = RNA(n+1) + diphosphate. RNA-directed RNA polymerase that is involved in both transcription and genome replication. Together with VP3 capping enzyme, forms an enzyme complex positioned near the channels situated at each of the five-fold vertices of the core. Following infection, the outermost layer of the virus is lost, leaving a double-layered particle (DLP) made up of the core and VP6 shell. VP1 then catalyzes the transcription of fully conservative plus-strand genomic RNAs that are extruded through the DLP's channels into the cytoplasm where they function as mRNAs for translation of viral proteins. One copy of each of the viral (+)RNAs is also recruited during core assembly, together with newly synthesized polymerase complexes and VP2. The polymerase of these novo-formed particles catalyzes the synthesis of complementary minus-strands leading to dsRNA formation. To do so, the polymerase specifically recognizes and binds 4 bases 5'-UGUG-3' in the conserved 3'-sequence of plus-strand RNA templates. VP2 presumably activates the autoinhibited VP1-RNA complex to coordinate packaging and genome replication. Once dsRNA synthesis is complete, the polymerase switches to the transcriptional mode, thus providing secondary transcription. This Rotavirus A (strain RVA/Human/Philippines/L26/1987/G12P1B[4]) (RV-A) protein is RNA-directed RNA polymerase.